The primary structure comprises 186 residues: Ribosome-recycling factor (186 aa).

The protein belongs to the RRF family.

It localises to the cytoplasm. Its function is as follows. Responsible for the release of ribosomes from messenger RNA at the termination of protein biosynthesis. May increase the efficiency of translation by recycling ribosomes from one round of translation to another. The chain is Ribosome-recycling factor from Beijerinckia indica subsp. indica (strain ATCC 9039 / DSM 1715 / NCIMB 8712).